The sequence spans 143 residues: Endoribonuclease YbeY (143 aa).

His-109, His-113, and His-119 together coordinate Zn(2+).

This sequence belongs to the endoribonuclease YbeY family. Zn(2+) serves as cofactor.

It localises to the cytoplasm. Single strand-specific metallo-endoribonuclease involved in late-stage 70S ribosome quality control and in maturation of the 3' terminus of the 16S rRNA. This chain is Endoribonuclease YbeY, found in Neorickettsia sennetsu (strain ATCC VR-367 / Miyayama) (Ehrlichia sennetsu).